Here is a 223-residue protein sequence, read N- to C-terminus: Proteasome subunit beta (223 aa).

The propeptide at 1 to 6 is removed in mature form; by autocatalysis; sequence MDTMKG. Residue Thr7 is the Nucleophile of the active site.

Belongs to the peptidase T1B family. In terms of assembly, the 20S proteasome core is composed of 14 alpha and 14 beta subunits that assemble into four stacked heptameric rings, resulting in a barrel-shaped structure. The two inner rings, each composed of seven catalytic beta subunits, are sandwiched by two outer rings, each composed of seven alpha subunits. The catalytic chamber with the active sites is on the inside of the barrel. Has a gated structure, the ends of the cylinder being occluded by the N-termini of the alpha-subunits. Is capped at one or both ends by the proteasome regulatory ATPase, PAN.

It is found in the cytoplasm. It carries out the reaction Cleavage of peptide bonds with very broad specificity.. With respect to regulation, the formation of the proteasomal ATPase PAN-20S proteasome complex, via the docking of the C-termini of PAN into the intersubunit pockets in the alpha-rings, triggers opening of the gate for substrate entry. Interconversion between the open-gate and close-gate conformations leads to a dynamic regulation of the 20S proteasome proteolysis activity. In terms of biological role, component of the proteasome core, a large protease complex with broad specificity involved in protein degradation. The polypeptide is Proteasome subunit beta (Methanocaldococcus vulcanius (strain ATCC 700851 / DSM 12094 / M7) (Methanococcus vulcanius)).